The primary structure comprises 503 residues: Maturase K (503 aa).

It belongs to the intron maturase 2 family. MatK subfamily.

It is found in the plastid. The protein localises to the chloroplast. Usually encoded in the trnK tRNA gene intron. Probably assists in splicing its own and other chloroplast group II introns. The polypeptide is Maturase K (Cercocarpus betuloides (Mountain mahogany)).